Here is a 178-residue protein sequence, read N- to C-terminus: Large ribosomal subunit protein uL5 (178 aa).

This sequence belongs to the universal ribosomal protein uL5 family. In terms of assembly, part of the 50S ribosomal subunit; part of the 5S rRNA/L5/L18/L25 subcomplex. Contacts the 5S rRNA and the P site tRNA. Forms a bridge to the 30S subunit in the 70S ribosome.

Functionally, this is one of the proteins that bind and probably mediate the attachment of the 5S RNA into the large ribosomal subunit, where it forms part of the central protuberance. In the 70S ribosome it contacts protein S13 of the 30S subunit (bridge B1b), connecting the 2 subunits; this bridge is implicated in subunit movement. Contacts the P site tRNA; the 5S rRNA and some of its associated proteins might help stabilize positioning of ribosome-bound tRNAs. This chain is Large ribosomal subunit protein uL5, found in Wigglesworthia glossinidia brevipalpis.